Consider the following 270-residue polypeptide: Phosphonoacetaldehyde hydrolase (270 aa).

Residue D11 is the Nucleophile of the active site. Positions 11 and 13 each coordinate Mg(2+). K53 acts as the Schiff-base intermediate with substrate in catalysis. D187 is a binding site for Mg(2+).

The protein belongs to the HAD-like hydrolase superfamily. PhnX family. As to quaternary structure, homodimer. It depends on Mg(2+) as a cofactor.

It carries out the reaction phosphonoacetaldehyde + H2O = acetaldehyde + phosphate + H(+). Its function is as follows. Involved in phosphonate degradation. This Salmonella gallinarum (strain 287/91 / NCTC 13346) protein is Phosphonoacetaldehyde hydrolase.